Here is a 420-residue protein sequence, read N- to C-terminus: DNA repair protein NreA (420 aa).

The PIP motif signature appears at 413–420 (QTDIFDFA).

The protein belongs to the Nre family. Interacts with the DNA polymerase sliding clamp (PCNA) via the PIP (PCNA-interacting peptide) motif.

Functionally, involved in DNA damage repair. Works together with the UvrABC proteins in repairing DNA damage resulting from exposure to the DNA damaging agent mitomycin C (MMC). This chain is DNA repair protein NreA, found in Haloferax volcanii (strain ATCC 29605 / DSM 3757 / JCM 8879 / NBRC 14742 / NCIMB 2012 / VKM B-1768 / DS2) (Halobacterium volcanii).